We begin with the raw amino-acid sequence, 78 residues long: Beta-defensin 105A (78 aa).

Positions M1 to A27 are cleaved as a signal peptide. 3 cysteine pairs are disulfide-bonded: C46/C74, C53/C67, and C57/C73.

It belongs to the beta-defensin family.

It is found in the secreted. In terms of biological role, has antimicrobial activity. The protein is Beta-defensin 105A (DEFB105A) of Hylobates lar (Lar gibbon).